We begin with the raw amino-acid sequence, 648 residues long: Serine/threonine-protein kinase PrkC (648 aa).

The Cytoplasmic portion of the chain corresponds to 1–330 (MLIGKRISGR…KKNGKRKKWP (330 aa)). One can recognise a Protein kinase domain in the interval 11–271 (YQILRVIGGG…DMEADIKTAF (261 aa)). Residues 17–25 (IGGGGMANV) and Lys40 contribute to the ATP site. The Proton acceptor role is filled by Asp134. A phosphothreonine; by autocatalysis mark is found at Thr162, Thr163, Thr165, and Thr167. Ser214 carries the phosphoserine; by autocatalysis modification. A phosphothreonine; by autocatalysis mark is found at Thr290, Thr313, and Thr320. The chain crosses the membrane as a helical span at residues 331-351 (WVLLTICLVFITAGILAVTVF). Residues 352-648 (PSLFMPKDVK…YKTIEYPKDE (297 aa)) are Extracellular-facing. 3 consecutive PASTA domains span residues 356-424 (MPKD…YKST), 425-492 (GKAK…TVSI), and 493-559 (GPED…TFSL).

It belongs to the protein kinase superfamily. Ser/Thr protein kinase family. Homodimer. In terms of processing, autophosphorylation on threonine residue(s) and serine residue considerably increases the kinase activity of the protein. Dephosphorylated in vitro by PrpC.

The protein localises to the spore membrane. The enzyme catalyses L-seryl-[protein] + ATP = O-phospho-L-seryl-[protein] + ADP + H(+). It catalyses the reaction L-threonyl-[protein] + ATP = O-phospho-L-threonyl-[protein] + ADP + H(+). With respect to regulation, bryostatin activates PrkC activity and induces germination, whereas staurosporine inhibits PrkC and significantly reduced peptidoglycan-dependent germination. Kinase activity of isolated N-terminus stimulated by poly-L-lysine or myelin basic protein. Functionally, protein kinase that is responsible for triggering spore germination in response to muropeptides, signaling bacteria to exit dormancy. PrkC is thus a germination receptor that binds peptidoglycan fragments containing m-Dpm (meso-diaminopimelate), which act as spore germinants. Autophosphorylates and phosphorylates EF-G (elongation factor G, fusA); the latter modification is likely necessary for germination in response to peptidoglycan. Another group did not detect phosphorylation of EF-G. PrkC is a substrate in vitro of the cotranscribed phosphatase PrpC, which suggests that they form a functional couple in vivo. Might also be involved in sporulation and biofilm formation. Does not seem to be involved in stress response. The sequence is that of Serine/threonine-protein kinase PrkC (prkC) from Bacillus subtilis (strain 168).